Here is a 319-residue protein sequence, read N- to C-terminus: Transaldolase (319 aa).

The active-site Schiff-base intermediate with substrate is the Lys-126.

This sequence belongs to the transaldolase family. Type 1 subfamily. As to quaternary structure, homodimer.

The protein resides in the cytoplasm. The catalysed reaction is D-sedoheptulose 7-phosphate + D-glyceraldehyde 3-phosphate = D-erythrose 4-phosphate + beta-D-fructose 6-phosphate. The protein operates within carbohydrate degradation; pentose phosphate pathway; D-glyceraldehyde 3-phosphate and beta-D-fructose 6-phosphate from D-ribose 5-phosphate and D-xylulose 5-phosphate (non-oxidative stage): step 2/3. Its function is as follows. Transaldolase is important for the balance of metabolites in the pentose-phosphate pathway. The polypeptide is Transaldolase (Bordetella petrii (strain ATCC BAA-461 / DSM 12804 / CCUG 43448)).